The chain runs to 421 residues: Cyclin-A1 (421 aa).

The tract at residues 1 to 20 (MRRHSSKSGVALPPVGQGPD) is disordered.

The protein belongs to the cyclin family. Cyclin AB subfamily. In terms of assembly, interacts with the CDK2 and the CDC2 protein kinases to form a serine/threonine kinase holoenzyme complex. The cyclin subunit imparts substrate specificity to the complex. Does not bind CDK4 and CDK5 (in vitro). The cyclin A1-CDK2 complex interacts with transcription factor E2F-1 and RB proteins. Found in a complex with CDK2, CABLES1 and CCNE1. Interacts with INCA1 and KLHDC9. In terms of processing, polyubiquitinated via 'Lys-11'-linked ubiquitin by the anaphase-promoting complex (APC/C), leading to its degradation by the proteasome. Deubiquitinated and stabilized by USP37 enables entry into S phase. Ubiquitinated during the G1 phase by the SCF(FBXO31) complex, leading to its proteasomal degradation.

Its subcellular location is the nucleus. In terms of biological role, may be involved in the control of the cell cycle at the G1/S (start) and G2/M (mitosis) transitions. May primarily function in the control of the germline meiotic cell cycle and additionally in the control of mitotic cell cycle in some somatic cells. This Rattus norvegicus (Rat) protein is Cyclin-A1 (Ccna1).